Consider the following 308-residue polypeptide: HPr kinase/phosphorylase (308 aa).

Residues histidine 138 and lysine 159 contribute to the active site. 153–160 contributes to the ATP binding site; the sequence is GESGLGKS. Serine 160 is a Mg(2+) binding site. Aspartate 177 serves as the catalytic Proton acceptor; for phosphorylation activity. Proton donor; for dephosphorylation activity. The interval 201-210 is important for the catalytic mechanism of both phosphorylation and dephosphorylation; the sequence is LEVRGLGLLD. A Mg(2+)-binding site is contributed by glutamate 202. The active site involves arginine 243. Positions 264-269 are important for the catalytic mechanism of dephosphorylation; sequence QVAAGR.

This sequence belongs to the HPrK/P family. Homohexamer. It depends on Mg(2+) as a cofactor.

It carries out the reaction [HPr protein]-L-serine + ATP = [HPr protein]-O-phospho-L-serine + ADP + H(+). It catalyses the reaction [HPr protein]-O-phospho-L-serine + phosphate + H(+) = [HPr protein]-L-serine + diphosphate. Its function is as follows. Catalyzes the ATP- as well as the pyrophosphate-dependent phosphorylation of a specific serine residue in HPr, a phosphocarrier protein of the phosphoenolpyruvate-dependent sugar phosphotransferase system (PTS). HprK/P also catalyzes the pyrophosphate-producing, inorganic phosphate-dependent dephosphorylation (phosphorolysis) of seryl-phosphorylated HPr (P-Ser-HPr). In Bordetella bronchiseptica (strain ATCC BAA-588 / NCTC 13252 / RB50) (Alcaligenes bronchisepticus), this protein is HPr kinase/phosphorylase.